Reading from the N-terminus, the 393-residue chain is Probable hydrolase sll0100 (393 aa).

The protein belongs to the peptidase M20 family.

The polypeptide is Probable hydrolase sll0100 (Synechocystis sp. (strain ATCC 27184 / PCC 6803 / Kazusa)).